Here is a 403-residue protein sequence, read N- to C-terminus: S-adenosylmethionine synthase (403 aa).

His-15 lines the ATP pocket. Residue Asp-17 coordinates Mg(2+). K(+) is bound at residue Glu-43. 2 residues coordinate L-methionine: Glu-56 and Gln-99. Residues 99-109 (QSPDINQGVDR) are flexible loop. ATP is bound by residues 166–168 (DAK), 232–233 (KF), Asp-241, 247–248 (RK), Ala-264, and Lys-268. An L-methionine-binding site is contributed by Asp-241. Position 272 (Lys-272) interacts with L-methionine.

The protein belongs to the AdoMet synthase family. Homotetramer; dimer of dimers. Mg(2+) serves as cofactor. It depends on K(+) as a cofactor.

It localises to the cytoplasm. It catalyses the reaction L-methionine + ATP + H2O = S-adenosyl-L-methionine + phosphate + diphosphate. The protein operates within amino-acid biosynthesis; S-adenosyl-L-methionine biosynthesis; S-adenosyl-L-methionine from L-methionine: step 1/1. Catalyzes the formation of S-adenosylmethionine (AdoMet) from methionine and ATP. The overall synthetic reaction is composed of two sequential steps, AdoMet formation and the subsequent tripolyphosphate hydrolysis which occurs prior to release of AdoMet from the enzyme. This Xanthomonas campestris pv. campestris (strain ATCC 33913 / DSM 3586 / NCPPB 528 / LMG 568 / P 25) protein is S-adenosylmethionine synthase.